An 872-amino-acid chain; its full sequence is Cyanophycin synthetase (872 aa).

An ATP-grasp domain is found at 224–480 (KTILQDAGVP…VAAPVMDMLF (257 aa)). 495–501 (GTNGKTT) is an ATP binding site.

It in the C-terminal section; belongs to the MurCDEF family. As to quaternary structure, homodimer.

The catalysed reaction is [L-4-(L-arginin-2-N-yl)aspartate](n) + L-aspartate + ATP = [L-4-(L-arginin-2-N-yl)aspartate](n)-L-aspartate + ADP + phosphate + H(+). It catalyses the reaction [L-4-(L-arginin-2-N-yl)aspartate](n)-L-aspartate + L-arginine + ATP = [L-4-(L-arginin-2-N-yl)aspartate](n+1) + ADP + phosphate + H(+). Functionally, catalyzes the ATP-dependent polymerization of arginine and aspartate to multi-L-arginyl-poly-L-aspartic acid (cyanophycin; a water-insoluble reserve polymer). The polypeptide is Cyanophycin synthetase (cphA) (Crocosphaera subtropica (strain ATCC 51142 / BH68) (Cyanothece sp. (strain ATCC 51142))).